The sequence spans 149 residues: Large ribosomal subunit protein uL16c (149 aa).

It belongs to the universal ribosomal protein uL16 family. In terms of assembly, part of the 50S ribosomal subunit.

It is found in the plastid. It localises to the organellar chromatophore. The protein is Large ribosomal subunit protein uL16c (rpl16) of Paulinella chromatophora.